The chain runs to 256 residues: Type III pantothenate kinase (256 aa).

6–13 (DIGNTHIV) serves as a coordination point for ATP. 109–112 (GADR) is a substrate binding site. Asp111 (proton acceptor) is an active-site residue. Residue Asp132 participates in K(+) binding. Thr135 provides a ligand contact to ATP. Thr186 provides a ligand contact to substrate.

Belongs to the type III pantothenate kinase family. As to quaternary structure, homodimer. NH4(+) is required as a cofactor. Requires K(+) as cofactor.

It localises to the cytoplasm. The enzyme catalyses (R)-pantothenate + ATP = (R)-4'-phosphopantothenate + ADP + H(+). The protein operates within cofactor biosynthesis; coenzyme A biosynthesis; CoA from (R)-pantothenate: step 1/5. In terms of biological role, catalyzes the phosphorylation of pantothenate (Pan), the first step in CoA biosynthesis. In Fusobacterium nucleatum subsp. nucleatum (strain ATCC 25586 / DSM 15643 / BCRC 10681 / CIP 101130 / JCM 8532 / KCTC 2640 / LMG 13131 / VPI 4355), this protein is Type III pantothenate kinase.